We begin with the raw amino-acid sequence, 146 residues long: MEINREDFEESIVNIGRVTKVVKGGRRFRFTALVVVGNKKGTIGFGAGKAKEVPDAIKKAVDNAFKNLSKVSIKGTTIAHDIEHKYNASRILLKPASEGTGVIAGGAVRPVLELAGIKDVLTKSIGSNNPGTLVRATVEALGRLKG.

The region spanning 8 to 71 (FEESIVNIGR…DNAFKNLSKV (64 aa)) is the S5 DRBM domain.

The protein belongs to the universal ribosomal protein uS5 family. As to quaternary structure, part of the 30S ribosomal subunit. Contacts proteins S4 and S8.

In terms of biological role, with S4 and S12 plays an important role in translational accuracy. Its function is as follows. Located at the back of the 30S subunit body where it stabilizes the conformation of the head with respect to the body. In Sulfurimonas denitrificans (strain ATCC 33889 / DSM 1251) (Thiomicrospira denitrificans (strain ATCC 33889 / DSM 1251)), this protein is Small ribosomal subunit protein uS5.